The sequence spans 341 residues: tRNA N6-adenosine threonylcarbamoyltransferase (341 aa).

Fe cation contacts are provided by His115 and His119. Residues 137 to 141 (IVSGG), Asp170, Gly183, Asp187, and Asn276 each bind substrate. Fe cation is bound at residue Asp304.

The protein belongs to the KAE1 / TsaD family. Requires Fe(2+) as cofactor.

The protein localises to the cytoplasm. It catalyses the reaction L-threonylcarbamoyladenylate + adenosine(37) in tRNA = N(6)-L-threonylcarbamoyladenosine(37) in tRNA + AMP + H(+). Its function is as follows. Required for the formation of a threonylcarbamoyl group on adenosine at position 37 (t(6)A37) in tRNAs that read codons beginning with adenine. Is involved in the transfer of the threonylcarbamoyl moiety of threonylcarbamoyl-AMP (TC-AMP) to the N6 group of A37, together with TsaE and TsaB. TsaD likely plays a direct catalytic role in this reaction. This is tRNA N6-adenosine threonylcarbamoyltransferase from Staphylococcus aureus (strain bovine RF122 / ET3-1).